We begin with the raw amino-acid sequence, 270 residues long: Tetraspanin-2 (270 aa).

Residues 1–8 (MALANNLT) are Cytoplasmic-facing. The chain crosses the membrane as a helical span at residues 9–29 (AILNLLALLCSIPITASGIWL). The Extracellular segment spans residues 30–42 (ASKPDNECVNLLR). Residues 43–63 (WPVVVLGVLILVVSATGFIGA) traverse the membrane as a helical segment. The Cytoplasmic portion of the chain corresponds to 64–74 (YKYKETLLAVY). The chain crosses the membrane as a helical span at residues 75 to 95 (LCCMAILIGLLLVVLIFAFVV). Residues 96–232 (TRPDGSYRVP…NLRKEWRKAN (137 aa)) lie on the Extracellular side of the membrane. A helical transmembrane segment spans residues 233-253 (LILIITVVVLIWVYVIACSAF). Residues 254–270 (RNAQTEDLFRKYKQGWV) are Cytoplasmic-facing.

This sequence belongs to the tetraspanin (TM4SF) family.

The protein localises to the membrane. May be involved in the regulation of cell differentiation. This is Tetraspanin-2 (TET2) from Arabidopsis thaliana (Mouse-ear cress).